Consider the following 35-residue polypeptide: Photosystem II reaction center protein Psb30 (35 aa).

The helical transmembrane segment at 6–26 (VIVQLVFLALIITTGPVIIVY) threads the bilayer.

This sequence belongs to the Psb30/Ycf12 family. PSII is composed of 1 copy each of membrane proteins PsbA, PsbB, PsbC, PsbD, PsbE, PsbF, PsbH, PsbI, PsbJ, PsbK, PsbL, PsbM, PsbT, PsbY, PsbZ, Psb30/Ycf12, peripheral proteins of the oxygen-evolving complex and a large number of cofactors. It forms dimeric complexes.

Its subcellular location is the plastid. It localises to the chloroplast thylakoid membrane. In terms of biological role, a core subunit of photosystem II (PSII), probably helps stabilize the reaction center. The polypeptide is Photosystem II reaction center protein Psb30 (Cyanidium caldarium (Red alga)).